The chain runs to 394 residues: 3-ketosteroid-9-alpha-monooxygenase, oxygenase component (394 aa).

Residues 27–129 (WHCLGLAKDF…TLDQDGLLFV (103 aa)) enclose the Rieske domain. Positions 68, 70, 87, and 90 each coordinate [2Fe-2S] cluster. 3 residues coordinate Fe cation: Asn175, His181, and His186. Tyr245 is a binding site for substrate. Position 305 (Asp305) interacts with Fe cation.

As to quaternary structure, homotrimer. The two-component system 3-ketosteroid-9-alpha-monooxygenase is composed of an oxygenase component KshA and a reductase component KshB. Requires [2Fe-2S] cluster as cofactor. It depends on Fe cation as a cofactor.

The enzyme catalyses androsta-1,4-diene-3,17-dione + 2 reduced [2Fe-2S]-[ferredoxin] + O2 + 2 H(+) = 9alpha-hydroxyandrosta-1,4-diene-3,17-dione + 2 oxidized [2Fe-2S]-[ferredoxin] + H2O. Functionally, may be involved in the degradation of cholic acid, a steroid acid found predominantly in the bile. In vitro, catalyzes the introduction of a 9alpha-hydroxyl moiety into the ring B of 3-ketosteroid substrates such as 1,4-androstadiene-3,17-dione (ADD), 4-androstene-3,17-dione (AD), 4-androstene-17beta-ol-3-one (testosterone), 4-pregnene-3,20-dione (progesterone), 3-oxo-23,24-bisnorcholesta-4-en-22-oate (4-BNC), 23,24-bisnorcholesta-4-ene-22-oate, 3-oxo-23,24-bisnorcholaesta-1,4-dien-22-oate (1,4-BNC), 23,24-bisnorcholesta-1,4-diene-22-oate and 3-oxo-23,24-bisnorcholesta-1,4-dien-22-oyl-coenzyme A thioester (1,4-BNC-CoA). KshA1 has the highest specificity for steroids possessing an isopropionyl side chain at C17. This Rhodococcus rhodochrous protein is 3-ketosteroid-9-alpha-monooxygenase, oxygenase component.